Here is a 592-residue protein sequence, read N- to C-terminus: MDLKTGRVVKVSGPLVVAEGMEEANLFDVVRVGDERLIGEIIEMREDKASIQVYEETSGLGPGAPVVTTGAPLSVELGPGLIEAMFDGIQRPLDAIEAKAGDFITRGIDVPSLSREKVWHFNPTKKAGDKVETGDILGLVQETSVIEHRIMVPPGIKGEIISLNEGDYTVIDKIGEIKTDKGIEDLTLMQKWPVRRGRPYKRKLNPSAPMVTGQRVVDTFFPVTKGGTACVPGPFGSGKTVVQHQLAKWADAQIVVYIGCGERGNEMTDVLNEFPELKDPKTGESLMKRTVLIANTSNMPVAAREASIYTGITIGEYFRDMGYSIALMADSTSRWAEALREMSGRLEEMPGEEGYPAYLGSRLAEFYERAGNVICLGQDGREGALTAIGAVSPPGGDLSEPVTQATLRIVKVFWGLDSQLAYRRHFPAINWLNSYSLYLDKVGPWMNENVAEDWVELRQKAMALLQEEANLQEIARLVGIDALSEEDRLKLEVAKSLREDYLQQNAFHDVDTYAPLNKQYRMLKAVLQFGDEARKALESGVYLKDILNLPVRDKIARAKYIDEKDILSIDEISKELTKDIEDLISKGGILDA.

ATP is bound at residue G233–T240.

Belongs to the ATPase alpha/beta chains family.

It carries out the reaction ATP + H2O + 4 H(+)(in) = ADP + phosphate + 5 H(+)(out). Its function is as follows. Produces ATP from ADP in the presence of a proton gradient across the membrane. The V-type alpha chain is a catalytic subunit. The sequence is that of V-type ATP synthase alpha chain 1 from Clostridium tetani (strain Massachusetts / E88).